Reading from the N-terminus, the 101-residue chain is Replication restart protein PriB (101 aa).

In terms of domain architecture, SSB spans M1–T101.

Belongs to the PriB family. Homodimer. Interacts with PriA and DnaT. Component of the replication restart primosome. Primosome assembly occurs via a 'hand-off' mechanism. PriA binds to replication forks, subsequently PriB then DnaT bind; DnaT then displaces ssDNA to generate the helicase loading substrate.

Functionally, involved in the restart of stalled replication forks, which reloads the replicative helicase on sites other than the origin of replication; the PriA-PriB pathway is the major replication restart pathway. During primosome assembly it facilitates complex formation between PriA and DnaT on DNA; stabilizes PriA on DNA. Stimulates the DNA unwinding activity of PriA helicase. This is Replication restart protein PriB from Shewanella halifaxensis (strain HAW-EB4).